A 278-amino-acid chain; its full sequence is Indole-3-glycerol phosphate synthase (278 aa).

It belongs to the TrpC family.

It catalyses the reaction 1-(2-carboxyphenylamino)-1-deoxy-D-ribulose 5-phosphate + H(+) = (1S,2R)-1-C-(indol-3-yl)glycerol 3-phosphate + CO2 + H2O. The protein operates within amino-acid biosynthesis; L-tryptophan biosynthesis; L-tryptophan from chorismate: step 4/5. The protein is Indole-3-glycerol phosphate synthase of Pseudomonas aeruginosa (strain LESB58).